A 140-amino-acid polypeptide reads, in one-letter code: PDZ domain-containing protein 11 (140 aa).

A PDZ domain is found at 47 to 129; it reads IVTLKKPPGA…ISMRVRFFPY (83 aa).

As to quaternary structure, interacts with ATP2B1, ATP2B2, ATP2B3, ATP2B4 and ATP7A. Interacts with PLEKHA7 (via WW domains) at zonula adherens; this interaction is essential for the interaction between PLEKHA7 and the ADAM10-binding protein TSPAN33. Interacts with SLC5A6.

The protein resides in the cytoplasm. It localises to the cell junction. It is found in the adherens junction. Its subcellular location is the cell membrane. Mediates docking of ADAM10 to zonula adherens by interacting with PLEKHA7 which is required for PLEKHA7 to interact with the ADAM10-binding protein TSPAN33. This chain is PDZ domain-containing protein 11 (Pdzd11), found in Mus musculus (Mouse).